A 228-amino-acid chain; its full sequence is MNASDLIRIMQFGDSVLPVGAFTFSNGVESAIQTGIVHDVATLKGFVLTALKQAASCDGMGVVAAHRAVVADDRDGIIRADWAVNNRKLNEESRLMATRMGKKLAEMSIHVVEHPLISWWLEQIKNGNTAGTYPVTQAVVMAAQGIGQREVVVMHQYGVAMTILSAAMRLMRVTHFDTQHILFELNHDIEKFCDIAEIGDINQMSSYVPIVDVLAAVHVKAHVRLFSN.

This sequence belongs to the UreF family. As to quaternary structure, ureD, UreF and UreG form a complex that acts as a GTP-hydrolysis-dependent molecular chaperone, activating the urease apoprotein by helping to assemble the nickel containing metallocenter of UreC. The UreE protein probably delivers the nickel.

The protein localises to the cytoplasm. Its function is as follows. Required for maturation of urease via the functional incorporation of the urease nickel metallocenter. The polypeptide is Urease accessory protein UreF (Yersinia pseudotuberculosis serotype IB (strain PB1/+)).